The following is a 178-amino-acid chain: GTP-dependent dephospho-CoA kinase (178 aa).

Asp43, Ile44, Val45, Asp62, Lys64, and Glu120 together coordinate GTP.

Belongs to the GTP-dependent DPCK family.

It carries out the reaction 3'-dephospho-CoA + GTP = GDP + CoA + H(+). It functions in the pathway cofactor biosynthesis; coenzyme A biosynthesis. In terms of biological role, catalyzes the GTP-dependent phosphorylation of the 3'-hydroxyl group of dephosphocoenzyme A to form coenzyme A (CoA). This Natronomonas pharaonis (strain ATCC 35678 / DSM 2160 / CIP 103997 / JCM 8858 / NBRC 14720 / NCIMB 2260 / Gabara) (Halobacterium pharaonis) protein is GTP-dependent dephospho-CoA kinase.